Reading from the N-terminus, the 200-residue chain is Holliday junction branch migration complex subunit RuvA (200 aa).

The segment at 1–63 is domain I; that stretch reads MYAYVKGKLT…EDAQLLYGFS (63 aa). The segment at 64 to 142 is domain II; sequence SEEEKDMFLS…ITEEDSDSLL (79 aa). Residues 143–149 are flexible linker; it reads QVDATST. Residues 150-200 are domain III; sequence EQDQFVQEAMLALEALGYSKRELAKVEKTLNKNKYDSVDEAVKAGLQLVVS.

Belongs to the RuvA family. Homotetramer. Forms an RuvA(8)-RuvB(12)-Holliday junction (HJ) complex. HJ DNA is sandwiched between 2 RuvA tetramers; dsDNA enters through RuvA and exits via RuvB. An RuvB hexamer assembles on each DNA strand where it exits the tetramer. Each RuvB hexamer is contacted by two RuvA subunits (via domain III) on 2 adjacent RuvB subunits; this complex drives branch migration. In the full resolvosome a probable DNA-RuvA(4)-RuvB(12)-RuvC(2) complex forms which resolves the HJ.

The protein resides in the cytoplasm. Its function is as follows. The RuvA-RuvB-RuvC complex processes Holliday junction (HJ) DNA during genetic recombination and DNA repair, while the RuvA-RuvB complex plays an important role in the rescue of blocked DNA replication forks via replication fork reversal (RFR). RuvA specifically binds to HJ cruciform DNA, conferring on it an open structure. The RuvB hexamer acts as an ATP-dependent pump, pulling dsDNA into and through the RuvAB complex. HJ branch migration allows RuvC to scan DNA until it finds its consensus sequence, where it cleaves and resolves the cruciform DNA. The chain is Holliday junction branch migration complex subunit RuvA from Staphylococcus aureus (strain MRSA252).